Reading from the N-terminus, the 468-residue chain is ATP synthase subunit beta (468 aa).

155-162 (GGAGVGKT) lines the ATP pocket.

This sequence belongs to the ATPase alpha/beta chains family. As to quaternary structure, F-type ATPases have 2 components, CF(1) - the catalytic core - and CF(0) - the membrane proton channel. CF(1) has five subunits: alpha(3), beta(3), gamma(1), delta(1), epsilon(1). CF(0) has three main subunits: a(1), b(2) and c(9-12). The alpha and beta chains form an alternating ring which encloses part of the gamma chain. CF(1) is attached to CF(0) by a central stalk formed by the gamma and epsilon chains, while a peripheral stalk is formed by the delta and b chains.

The protein localises to the cell membrane. It catalyses the reaction ATP + H2O + 4 H(+)(in) = ADP + phosphate + 5 H(+)(out). Functionally, produces ATP from ADP in the presence of a proton gradient across the membrane. The catalytic sites are hosted primarily by the beta subunits. This Streptococcus thermophilus (strain ATCC BAA-250 / LMG 18311) protein is ATP synthase subunit beta.